The primary structure comprises 485 residues: 3-isopropylmalate dehydratase large subunit (485 aa).

[4Fe-4S] cluster-binding residues include cysteine 367, cysteine 427, and cysteine 430. The segment covering 439 to 451 (SPGQRAASTSNRN) has biased composition (polar residues). A disordered region spans residues 439 to 462 (SPGQRAASTSNRNFEGRQGKGGRT).

It belongs to the aconitase/IPM isomerase family. LeuC type 1 subfamily. Heterodimer of LeuC and LeuD. [4Fe-4S] cluster is required as a cofactor.

It catalyses the reaction (2R,3S)-3-isopropylmalate = (2S)-2-isopropylmalate. It participates in amino-acid biosynthesis; L-leucine biosynthesis; L-leucine from 3-methyl-2-oxobutanoate: step 2/4. Catalyzes the isomerization between 2-isopropylmalate and 3-isopropylmalate, via the formation of 2-isopropylmaleate. The protein is 3-isopropylmalate dehydratase large subunit of Actinoplanes teichomyceticus.